The following is a 703-amino-acid chain: MSSDLVMPALGRPFTLGMLYDARREKLIPGFSLFGDETLQKYQSSNAQRSSEFKIVASDSTESKSSAMDIEASLGVSFLGGLVEVGGSAKYLNNTKKYQNQSRVTLKYKATTVYKQFTAPPGTVTVQETAITEKGLATHVVTSILYGANAFFVSDSDKVEDTNLQDIQGKMEAAIKKIPTISIEGSASVQLTDEEKSLASNLSCKFHGDFLLESLPTTFEDAVKTYQTLPTLIGEDGANSVPMKVWLAPLKSYNSKAQQLIQEINVSKVRRIHTTLEELHKLKRRANEAMDVKLVQRIPLIHDKISNFQQIFQDYMLTVQKKIAEKLPLVRAGTESEQSLQKIIDDRAQSPFSNEKVSKWLDAVEREIAVLKSCAGMVEGTQAKFVSNQTELDREVLVGKVKHAVCFIFTSVERNDPYLKVLSDYWESPPSNNAKDVAPSTEDKWCFSTEVVLKMQQRAQTFCDHVNDFEKSRNVGFFITALENGKFQGASIYYYKEGSLATQDFTFPRMPFVQGYKKRSDLLWYACDLTFDRNTINNWISLSDNDTFAASEHGKRQNYPKHPERFVSFNQVLCNEGLMGKHYWEVEWNGYIDVGIAYISIPRKEIDFASAFGYNTYSWVLSYNPKIGYIERHKKREYNVRAPNPGFKRLGLFLDWRYGSISFYAVSSDEVHHLHTFKTKFTEPVYPAFSIGPAGNHGTLRLL.

The structural MACPF/CDC pore-forming domain stretch occupies residues 2 to 265 (SSDLVMPALG…KAQQLIQEIN (264 aa)). Residues 266 to 385 (VSKVRRIHTT…GMVEGTQAKF (120 aa)) are structural FAT domain. A thioredoxin (THX) domain region spans residues 386 to 517 (VSNQTELDRE…PRMPFVQGYK (132 aa)). Positions 508–703 (PRMPFVQGYK…AGNHGTLRLL (196 aa)) constitute a B30.2/SPRY domain.

Belongs to the SNTX/VTX toxin family. Heterodimer of alpha and beta subunits; non-covalently linked. Intrachain disulfide bonds may be present in the heterodimer. In terms of processing, not glycosylated. Expressed by the venom gland.

Its subcellular location is the secreted. Its function is as follows. This lethal (towards mammals) heterodimer induces hemolytic activities due to its ability to form pores in the cell membrane. The pore may be composed of 10 SNTX-alpha/beta heterodimers. The toxin elicits potent hypotension which is endothelium-dependent and appears to be mediated by the nitric oxide pathway and activation of potassium channels. In addition, it displays edema-inducing activities, increases vascular permeability. It also shows myotoxic activities and interferes irreversibly with neuromuscular function. It also induces irreversible platelet aggregation in rabbit or rat (but not in human or mouse) whole blood. In addition, it has been observed to increase spontaneous quantal acetylcholine release from isolated frog cutaneous pectoris motor endings. The polypeptide is Stonustoxin subunit alpha (Synanceia horrida (Estuarine stonefish)).